Consider the following 240-residue polypeptide: MSVLFISDLHLEAERPDITRAFLSFLDERARRAEALYILGDFFEAWIGDDGMDAFQHSIASALRQVADGGTRLYLMHGNRDFLIGQAFCREAGCTLLPDPSVIDLYGEPVLLMHGDSLCTRDEAYMRLRRWLRNPLTLWVLRHLPLATRHKLARKLRKESRAQTRMKAVDIIDVTPDEVPLAMRRHGVRTLIHGHTHRPAEHALEVDGQPARRIVLGDWDRQGWALEIDANGHRQAPFPL.

D8, H10, D41, N79, and H114 together coordinate Mn(2+). 79-80 (NR) is a substrate binding site. Substrate contacts are provided by D122, S160, T164, K167, and H195. H195 and H197 together coordinate Mn(2+).

It belongs to the LpxH family. It depends on Mn(2+) as a cofactor.

The protein localises to the cell inner membrane. The enzyme catalyses UDP-2-N,3-O-bis[(3R)-3-hydroxytetradecanoyl]-alpha-D-glucosamine + H2O = 2-N,3-O-bis[(3R)-3-hydroxytetradecanoyl]-alpha-D-glucosaminyl 1-phosphate + UMP + 2 H(+). It participates in glycolipid biosynthesis; lipid IV(A) biosynthesis; lipid IV(A) from (3R)-3-hydroxytetradecanoyl-[acyl-carrier-protein] and UDP-N-acetyl-alpha-D-glucosamine: step 4/6. Its function is as follows. Hydrolyzes the pyrophosphate bond of UDP-2,3-diacylglucosamine to yield 2,3-diacylglucosamine 1-phosphate (lipid X) and UMP by catalyzing the attack of water at the alpha-P atom. Involved in the biosynthesis of lipid A, a phosphorylated glycolipid that anchors the lipopolysaccharide to the outer membrane of the cell. The sequence is that of UDP-2,3-diacylglucosamine hydrolase from Pseudomonas paraeruginosa (strain DSM 24068 / PA7) (Pseudomonas aeruginosa (strain PA7)).